Consider the following 376-residue polypeptide: N-acetyldiaminopimelate deacetylase (376 aa).

Aspartate 69 is a catalytic residue. Glutamate 128 functions as the Proton acceptor in the catalytic mechanism.

It belongs to the peptidase M20A family. N-acetyldiaminopimelate deacetylase subfamily.

It carries out the reaction N-acetyl-(2S,6S)-2,6-diaminopimelate + H2O = (2S,6S)-2,6-diaminopimelate + acetate. It functions in the pathway amino-acid biosynthesis; L-lysine biosynthesis via DAP pathway; LL-2,6-diaminopimelate from (S)-tetrahydrodipicolinate (acetylase route): step 3/3. Functionally, catalyzes the conversion of N-acetyl-diaminopimelate to diaminopimelate and acetate. The polypeptide is N-acetyldiaminopimelate deacetylase (Bacillus mycoides (strain KBAB4) (Bacillus weihenstephanensis)).